The primary structure comprises 265 residues: Phosphonates import ATP-binding protein PhnC 1 (265 aa).

The ABC transporter domain occupies 3–247; it reads LRLSAIDLRH…HLDTLYANEQ (245 aa). 36-43 is an ATP binding site; the sequence is GPSGAGKT.

Belongs to the ABC transporter superfamily. Phosphonates importer (TC 3.A.1.9.1) family. The complex is composed of two ATP-binding proteins (PhnC), two transmembrane proteins (PhnE) and a solute-binding protein (PhnD).

It localises to the cell inner membrane. It catalyses the reaction phosphonate(out) + ATP + H2O = phosphonate(in) + ADP + phosphate + H(+). Functionally, part of the ABC transporter complex PhnCDE involved in phosphonates import. Responsible for energy coupling to the transport system. This is Phosphonates import ATP-binding protein PhnC 1 from Pseudomonas syringae pv. tomato (strain ATCC BAA-871 / DC3000).